The following is an 862-amino-acid chain: Interleukin-12 receptor subunit beta-2 (862 aa).

Residues 1–23 (MAHTFRGCSLAFMFIITWLLIKA) form the signal peptide. Residues 24–622 (KIDACKRGDV…REFCLQGKAN (599 aa)) are Extracellular-facing. N-linked (GlcNAc...) asparagine glycans are attached at residues Asn-48, Asn-129, Asn-166, Asn-195, and Asn-271. Fibronectin type-III domains lie at 126–221 (QPQN…FLDI), 226–319 (PPWD…TPEE), 320–419 (EPTG…LCEA), 423–520 (APRQ…KHKA), and 521–620 (PLSG…LQGK). A WSXWS motif motif is present at residues 305 to 309 (WSDWS). 3 N-linked (GlcNAc...) asparagine glycosylation sites follow: Asn-347, Asn-376, and Asn-480. Residues 623–643 (WMAFVAPSICIAIIMVGIFST) form a helical membrane-spanning segment. The Cytoplasmic portion of the chain corresponds to 644–862 (HYFQQKVFVL…LKMRCDSLML (219 aa)). The short motif at 662–670 (CSREIPDPA) is the Box 1 motif element. The disordered stretch occupies residues 725-755 (NWPQREKGIQGHQASEKDMMHSASSPPPPRA). Positions 728–744 (QREKGIQGHQASEKDMM) are enriched in basic and acidic residues. The tract at residues 796-801 (THDGYL) is required for STAT4 binding. Tyr-800 carries the phosphotyrosine modification.

The protein belongs to the type I cytokine receptor family. Type 2 subfamily. In terms of assembly, heterodimer/heterooligomer; disulfide-linked. The functional high affinity IL12 receptor is composed of I12RB1 and IL12RB2. Il12RB2 binds JAK2 (via its N-terminal) through a membrane-proximal region of the cytoplasmic domain. Interaction, in vitro and in vivo, with SOCS3 (via its SH2 domain) inhibits the STAT4-mediated activation. Binds STAT4 through a membrane-distal C-terminal region. Post-translationally, on IL12 binding, phosphorylated on C-terminal tyrosine residues by JAK2. Phosphorylation on Tyr-800 is required for STAT4 binding and activation, and for SOCS3 binding. In terms of tissue distribution, isoform 2 is expressed at similar levels in both naive and activated T-cells.

The protein localises to the membrane. Its function is as follows. Receptor for interleukin-12. This subunit is the signaling component coupling to the JAK2/STAT4 pathway. Promotes the proliferation of T-cells as well as NK cells. Induces the promotion of T-cells towards the Th1 phenotype by strongly enhancing IFN-gamma production. The sequence is that of Interleukin-12 receptor subunit beta-2 (IL12RB2) from Homo sapiens (Human).